Reading from the N-terminus, the 302-residue chain is HTH-type transcriptional regulator ArgP (302 aa).

Positions 4-60 (PDYRTLQALDAVIRERGFERAAQKLCITQSAVSQRIKQLENLFGQPLLVRTVPPRPT) constitute an HTH lysR-type domain. The H-T-H motif DNA-binding region spans 21 to 40 (FERAAQKLCITQSAVSQRIK).

The protein belongs to the LysR transcriptional regulatory family. Homodimer.

Functionally, controls the transcription of genes involved in arginine and lysine metabolism. The polypeptide is HTH-type transcriptional regulator ArgP (Yersinia pseudotuberculosis serotype O:1b (strain IP 31758)).